Here is an 876-residue protein sequence, read N- to C-terminus: GRB2-associated and regulator of MAPK protein (876 aa).

A CABIT region spans residues 12-320 (KDVKWSPVAM…HQVKGDMWPE (309 aa)). Tyr105 is modified (phosphotyrosine). The interval 427–448 (GDSGSDYLFPEANEESAGIPGK) is disordered. Phosphotyrosine is present on Tyr453. Disordered regions lie at residues 460–501 (EGKP…ATLG) and 530–572 (LNAP…SYYS). The tract at residues 498 to 550 (ATLGATIKSSEIALPPPPVPPKSEAVREECRLLNAPPVPPRSAKPLSTSPSIP) is necessary for interaction with GRB2. The span at 560 to 572 (QTRSPSPTLSYYS) shows a compositional bias: polar residues. Ser609 and Ser613 each carry phosphoserine. 2 stretches are compositionally biased toward polar residues: residues 630 to 639 (SGASENQTRS) and 647 to 657 (RSYSYPRQKTP). Disordered stretches follow at residues 630-664 (SGASENQTRSDFLLDPSRSYSYPRQKTPGTPKRTC) and 722-759 (CPALPPRAPKPVEQKATPETSPLPLKIDGAEEDPTAGS). In terms of domain architecture, SAM spans 811-876 (LSIEEVSKSL…QFINGWRPKI (66 aa)).

This sequence belongs to the GAREM family. Interacts with EGFR. Interacts (via proline-rich domain and phosphorylated at Tyr-105 and Tyr-453) with GRB2 (via SH3 domains); the interaction occurs upon EGF stimulation. Interacts (phosphorylated at Tyr-453) with PTPN11; the interaction increases MAPK/ERK activity and does not affect the GRB2/SOS complex formation. Post-translationally, on EGF stimulation, phosphorylated on Tyr-105 and Tyr-453.

Acts as an adapter protein that plays a role in intracellular signaling cascades triggered either by the cell surface activated epidermal growth factor receptor and/or cytoplasmic protein tyrosine kinases. Promotes activation of the MAPK/ERK signaling pathway. Plays a role in the regulation of cell proliferation. This Mus musculus (Mouse) protein is GRB2-associated and regulator of MAPK protein (Garem1).